The following is a 239-amino-acid chain: Phosphoribosylaminoimidazole-succinocarboxamide synthase (239 aa).

Belongs to the SAICAR synthetase family.

The enzyme catalyses 5-amino-1-(5-phospho-D-ribosyl)imidazole-4-carboxylate + L-aspartate + ATP = (2S)-2-[5-amino-1-(5-phospho-beta-D-ribosyl)imidazole-4-carboxamido]succinate + ADP + phosphate + 2 H(+). The protein operates within purine metabolism; IMP biosynthesis via de novo pathway; 5-amino-1-(5-phospho-D-ribosyl)imidazole-4-carboxamide from 5-amino-1-(5-phospho-D-ribosyl)imidazole-4-carboxylate: step 1/2. The polypeptide is Phosphoribosylaminoimidazole-succinocarboxamide synthase (Acinetobacter baylyi (strain ATCC 33305 / BD413 / ADP1)).